The sequence spans 129 residues: Small ribosomal subunit protein uS11 (129 aa).

It belongs to the universal ribosomal protein uS11 family. In terms of assembly, part of the 30S ribosomal subunit. Interacts with proteins S7 and S18. Binds to IF-3.

Its function is as follows. Located on the platform of the 30S subunit, it bridges several disparate RNA helices of the 16S rRNA. Forms part of the Shine-Dalgarno cleft in the 70S ribosome. In Novosphingobium aromaticivorans (strain ATCC 700278 / DSM 12444 / CCUG 56034 / CIP 105152 / NBRC 16084 / F199), this protein is Small ribosomal subunit protein uS11.